Reading from the N-terminus, the 341-residue chain is Thromboxane A2 receptor (341 aa).

The Extracellular segment spans residues 1–29; sequence MWPNGTSLGACFRPVNITLQERRAIASPW. Residues Asn4 and Asn16 are each glycosylated (N-linked (GlcNAc...) asparagine). A helical transmembrane segment spans residues 30 to 52; it reads FAASFCALGLGSNLLALSVLAGA. Topologically, residues 53-65 are cytoplasmic; sequence RPGAGPRSSFLAL. A helical membrane pass occupies residues 66-86; sequence LCGLVLTDFLGLLVTGAIVAS. Residues 87–105 are Extracellular-facing; the sequence is QHAALLDWRATDPSCRLCY. A disulfide bond links Cys104 and Cys181. The chain crosses the membrane as a helical span at residues 106–127; the sequence is FMGVAMVFFGLCPLLLGAAMAS. The Cytoplasmic segment spans residues 128–147; it reads ERFVGITRPFSRPTATSRRA. The helical transmembrane segment at 148 to 170 threads the bilayer; that stretch reads WATVGLVWVAAGALGLLPLLGLG. Residues 171-191 are Extracellular-facing; it reads RYSVQYPGSWCFLTLGTQRGD. Residues 192–217 form a helical membrane-spanning segment; sequence VVFGLIFALLGSASVGLSLLLNTVSV. Residues 218–244 lie on the Cytoplasmic side of the membrane; it reads ATLCRVYHTREATQRPRDCEVEMMVQL. The helical transmembrane segment at 245–268 threads the bilayer; that stretch reads VGIMVVATVCWMPLLVFIMQTLLQ. The Extracellular portion of the chain corresponds to 269–287; the sequence is TPPVMSFSGQLLRATEHQL. The chain crosses the membrane as a helical span at residues 288 to 309; that stretch reads LIYLRVATWNQILDPWVYILFR. At 310–341 the chain is on the cytoplasmic side; sequence RSVLRRLHPRFSSQLQAVSLRRPPAQAMLSGP. Ser328 is modified (phosphoserine).

It belongs to the G-protein coupled receptor 1 family. As to quaternary structure, interacts with RPGRIP1L. Interacts with RACK1; the interaction regulates TBXA2R cell surface expression.

It is found in the cell membrane. Receptor for thromboxane A2 (TXA2), a potent stimulator of platelet aggregation. The activity of this receptor is mediated by a G-protein that activates a phosphatidylinositol-calcium second messenger system. In the kidney, the binding of TXA2 to glomerular TP receptors causes intense vasoconstriction. Activates phospholipase C and adenylyl cyclase. This is Thromboxane A2 receptor (Tbxa2r) from Mus musculus (Mouse).